The primary structure comprises 429 residues: Type II methyltransferase M.AgeI (429 aa).

The 429-residue stretch at 1–429 folds into the SAM-dependent MTase C5-type domain; sequence MKTIDLFCGA…MAETIKVAIS (429 aa). Residue Cys-80 is part of the active site.

Belongs to the class I-like SAM-binding methyltransferase superfamily. C5-methyltransferase family.

It carries out the reaction a 2'-deoxycytidine in DNA + S-adenosyl-L-methionine = a 5-methyl-2'-deoxycytidine in DNA + S-adenosyl-L-homocysteine + H(+). Its function is as follows. A methylase, recognizes the double-stranded sequence 5'-ACCGGT-3', methylates C-3 on both strands, and protects the DNA from cleavage by the AgeI endonuclease. The protein is Type II methyltransferase M.AgeI (ageIM) of Thalassovita gelatinovora (Thalassobius gelatinovorus).